Here is a 402-residue protein sequence, read N- to C-terminus: MEGLVPVQRLPIKVASPSLYRCNNSVSIRRSISGFAMDRKINFRAPSQFSIRAQQSDLKESLAVSSSSVEDKGNVLRIKEWEVEMYQEELAISQGIRIRRKPPSKAPLGYSGPFELRLHNNDADSPRNILEEITWYKDVEVSRMKELNPLDVLKKAVEDAPPTRDFVGALRMAHKRTGFPGLIAEVKKASPSRGILKENFDPVEIAQAYEKGGAACLSVLTDQKYFQGGFENLEAIRSAGVKCPLLCKEFVVDPWQIYYARTKGADAVLLIAAVLADLEITFLLKICKKLSLAALVEVHDEREMGRVLGIEGIELVGINNRSLETFEVDISNTKKLLEGEHGRQIRERDMIVVGESGLFTPDDIAYVQAAGVKAVLVGESIVKQNDPEKGIAGLFGRNISHT.

A chloroplast-targeting transit peptide spans 1-65 (MEGLVPVQRL…SDLKESLAVS (65 aa)).

Belongs to the TrpC family. Expressed in leaves.

Its subcellular location is the plastid. It is found in the chloroplast. It catalyses the reaction 1-(2-carboxyphenylamino)-1-deoxy-D-ribulose 5-phosphate + H(+) = (1S,2R)-1-C-(indol-3-yl)glycerol 3-phosphate + CO2 + H2O. It functions in the pathway amino-acid biosynthesis; L-tryptophan biosynthesis; L-tryptophan from chorismate: step 4/5. Its function is as follows. Indole-3-glycerol phosphate synthase required for tryptophan biosynthesis. This is Indole-3-glycerol phosphate synthase, chloroplastic from Arabidopsis thaliana (Mouse-ear cress).